A 524-amino-acid chain; its full sequence is Putative ribose/galactose/methyl galactoside import ATP-binding protein 1 (524 aa).

2 consecutive ABC transporter domains span residues 35–271 (LEVR…VGRE) and 281–520 (VPIG…RIMD). 67 to 74 (GENGAGKS) is an ATP binding site.

Belongs to the ABC transporter superfamily. Carbohydrate importer 2 (CUT2) (TC 3.A.1.2) family.

The protein resides in the cell inner membrane. It carries out the reaction D-ribose(out) + ATP + H2O = D-ribose(in) + ADP + phosphate + H(+). The enzyme catalyses D-galactose(out) + ATP + H2O = D-galactose(in) + ADP + phosphate + H(+). Part of an ABC transporter complex involved in carbohydrate import. Could be involved in ribose, galactose and/or methyl galactoside import. Responsible for energy coupling to the transport system. In Burkholderia cenocepacia (strain HI2424), this protein is Putative ribose/galactose/methyl galactoside import ATP-binding protein 1.